The primary structure comprises 320 residues: Glutathione synthetase (320 aa).

Residues 130–315 (KIFISWFSRF…ITGILIDYIE (186 aa)) enclose the ATP-grasp domain. An ATP-binding site is contributed by 156–212 (WKEKNDIILKPLDAMGGKGVFRIKKDDPNFSVIVETLTNYEKKYCMIQTYLPEVQFG). The Mg(2+) site is built by E286 and N288.

Belongs to the prokaryotic GSH synthase family. Requires Mg(2+) as cofactor. It depends on Mn(2+) as a cofactor.

It catalyses the reaction gamma-L-glutamyl-L-cysteine + glycine + ATP = glutathione + ADP + phosphate + H(+). It participates in sulfur metabolism; glutathione biosynthesis; glutathione from L-cysteine and L-glutamate: step 2/2. The chain is Glutathione synthetase from Buchnera aphidicola subsp. Schizaphis graminum (strain Sg).